Here is a 451-residue protein sequence, read N- to C-terminus: Tubulin gamma-2 chain (451 aa).

Phosphoserine; by BRSK1 is present on Ser131. 142 to 148 is a binding site for GTP; sequence AGGTGSG.

It belongs to the tubulin family. In terms of assembly, component of the gamma-tubulin ring complex (gTuRC) consisting of TUBGCP2, TUBGCP3, TUBGCP4, TUBGCP5 and TUBGCP6 and gamma-tubulin TUBG1 or TUBG2. TUBGCP2, TUBGCP3, TUBGCP4, TUBGCP5 and TUBGCP6 assemble in a 5:5:2:1:1 stoichiometry; each is associated with a gamma-tubulin, thereby arranging 14 gamma-tubulins in a helical manner. Gamma-tubulin at the first position is blocked by TUBGCP3 at the last position, allowing 13 protafilaments to grow into a microtubule. Interacts with alpha-beta tubulin heterodimers; the interaction allows microtubules to nucleate from the gTuRC. Post-translationally, phosphorylation at Ser-131 by BRSK1 regulates centrosome duplication, possibly by mediating relocation of gamma-tubulin and its associated proteins from the cytoplasm to the centrosome.

It is found in the cytoplasm. The protein localises to the cytoskeleton. Its subcellular location is the microtubule organizing center. The protein resides in the centrosome. Functionally, tubulin is the major constituent of microtubules, protein filaments consisting of alpha- and beta-tubulin heterodimers. Gamma-tubulin is a key component of the gamma-tubulin ring complex (gTuRC) which mediates microtubule nucleation. The gTuRC regulates the minus-end nucleation of alpha-beta tubulin heterodimers that grow into microtubule protafilaments, a critical step in centrosome duplication and spindle formation. The sequence is that of Tubulin gamma-2 chain (Tubg2) from Mus musculus (Mouse).